The primary structure comprises 170 residues: NADH-quinone oxidoreductase subunit B (170 aa).

Residues Cys-37, Cys-38, Cys-102, and Cys-131 each contribute to the [4Fe-4S] cluster site.

Belongs to the complex I 20 kDa subunit family. As to quaternary structure, NDH-1 is composed of 14 different subunits. Subunits NuoB, C, D, E, F, and G constitute the peripheral sector of the complex. It depends on [4Fe-4S] cluster as a cofactor.

Its subcellular location is the cell inner membrane. The enzyme catalyses a quinone + NADH + 5 H(+)(in) = a quinol + NAD(+) + 4 H(+)(out). In terms of biological role, NDH-1 shuttles electrons from NADH, via FMN and iron-sulfur (Fe-S) centers, to quinones in the respiratory chain. The immediate electron acceptor for the enzyme in this species is believed to be ubiquinone. Couples the redox reaction to proton translocation (for every two electrons transferred, four hydrogen ions are translocated across the cytoplasmic membrane), and thus conserves the redox energy in a proton gradient. The protein is NADH-quinone oxidoreductase subunit B of Geotalea daltonii (strain DSM 22248 / JCM 15807 / FRC-32) (Geobacter daltonii).